Consider the following 101-residue polypeptide: Hg-scorpine-like-2 (101 aa).

A signal peptide spans 1-17 (MKLTILILLVITSFCSC). A BetaSPN-type CS-alpha/beta domain is found at 60-100 (QQLCMFNKDVAGWCEKSCQQSAHQKGYCHGTKCKCGIPLNY). 3 disulfide bridges follow: Cys63/Cys87, Cys73/Cys92, and Cys77/Cys94.

This sequence belongs to the long chain scorpion toxin family. Class 3 subfamily. Expressed by the venom gland.

It localises to the secreted. Functionally, inhibits voltage-gated potassium channels. The sequence is that of Hg-scorpine-like-2 from Hoffmannihadrurus gertschi (Scorpion).